A 113-amino-acid chain; its full sequence is Protein FMC1 homolog (113 aa).

Positions 94–113 (SAGLVGLKLPHQPGGKGWEP) are disordered.

The protein belongs to the FMC1 family. Interacts with ATPAF2.

It localises to the mitochondrion. Its function is as follows. Plays a role in the assembly/stability of the mitochondrial membrane ATP synthase (F(1)F(0) ATP synthase or Complex V). The protein is Protein FMC1 homolog of Homo sapiens (Human).